Reading from the N-terminus, the 122-residue chain is Semaphorin-like protein A43 (122 aa).

Residues 1–122 form the Sema domain; the sequence is MIYLYTADNV…RIMYLFYEYH (122 aa).

It belongs to the semaphorin family.

The polypeptide is Semaphorin-like protein A43 (A43R) (Homo sapiens (Human)).